The primary structure comprises 742 residues: Phosphoribosylformylglycinamidine synthase subunit PurL (742 aa).

His54 is an active-site residue. ATP-binding residues include Tyr57 and Lys96. Glu98 contributes to the Mg(2+) binding site. Substrate is bound by residues 99–102 (SHNH) and Arg121. Residue His100 is the Proton acceptor of the active site. Asp122 serves as a coordination point for Mg(2+). A substrate-binding site is contributed by Gln245. Asp273 contacts Mg(2+). 317–319 (ESQ) contributes to the substrate binding site. ATP-binding residues include Asp500 and Gly537. Residue Asn538 coordinates Mg(2+). Ser540 lines the substrate pocket.

It belongs to the FGAMS family. Monomer. Part of the FGAM synthase complex composed of 1 PurL, 1 PurQ and 2 PurS subunits.

The protein localises to the cytoplasm. The catalysed reaction is N(2)-formyl-N(1)-(5-phospho-beta-D-ribosyl)glycinamide + L-glutamine + ATP + H2O = 2-formamido-N(1)-(5-O-phospho-beta-D-ribosyl)acetamidine + L-glutamate + ADP + phosphate + H(+). It functions in the pathway purine metabolism; IMP biosynthesis via de novo pathway; 5-amino-1-(5-phospho-D-ribosyl)imidazole from N(2)-formyl-N(1)-(5-phospho-D-ribosyl)glycinamide: step 1/2. Part of the phosphoribosylformylglycinamidine synthase complex involved in the purines biosynthetic pathway. Catalyzes the ATP-dependent conversion of formylglycinamide ribonucleotide (FGAR) and glutamine to yield formylglycinamidine ribonucleotide (FGAM) and glutamate. The FGAM synthase complex is composed of three subunits. PurQ produces an ammonia molecule by converting glutamine to glutamate. PurL transfers the ammonia molecule to FGAR to form FGAM in an ATP-dependent manner. PurS interacts with PurQ and PurL and is thought to assist in the transfer of the ammonia molecule from PurQ to PurL. This is Phosphoribosylformylglycinamidine synthase subunit PurL from Oceanobacillus iheyensis (strain DSM 14371 / CIP 107618 / JCM 11309 / KCTC 3954 / HTE831).